The primary structure comprises 294 residues: Nucleoside-specific channel-forming protein Tsx (294 aa).

The signal sequence occupies residues 1-22; the sequence is MKKTLLAAGAVVALSTTFAAGA.

Belongs to the nucleoside-specific channel-forming outer membrane porin (Tsx) (TC 1.B.10) family.

The protein localises to the cell outer membrane. In terms of biological role, functions as a substrate-specific channel for nucleosides and deoxynucleosides. Also functions in albicidin uptake and as receptor for colicin K. Also is a receptor for several Tsx-specific bacteriophages. The protein is Nucleoside-specific channel-forming protein Tsx of Klebsiella pneumoniae.